Reading from the N-terminus, the 305-residue chain is Probable GTP 3',8-cyclase (305 aa).

The Radical SAM core domain occupies 6 to 228; the sequence is NHRRPLVSLR…MTRKFMQDRK (223 aa). A GTP-binding site is contributed by Arg-15. Residues Cys-22 and Cys-26 each contribute to the [4Fe-4S] cluster site. An S-adenosyl-L-methionine-binding site is contributed by Tyr-28. Cys-29 serves as a coordination point for [4Fe-4S] cluster. A GTP-binding site is contributed by Arg-62. Gly-66 contacts S-adenosyl-L-methionine. Thr-92 contacts GTP. Residue Ser-116 participates in S-adenosyl-L-methionine binding. Lys-153 serves as a coordination point for GTP. Positions 249 and 252 each coordinate [4Fe-4S] cluster. 254–256 provides a ligand contact to GTP; that stretch reads RLR. Cys-266 contributes to the [4Fe-4S] cluster binding site.

This sequence belongs to the radical SAM superfamily. MoaA family. [4Fe-4S] cluster is required as a cofactor.

The catalysed reaction is GTP + AH2 + S-adenosyl-L-methionine = (8S)-3',8-cyclo-7,8-dihydroguanosine 5'-triphosphate + 5'-deoxyadenosine + L-methionine + A + H(+). It functions in the pathway cofactor biosynthesis; molybdopterin biosynthesis. Catalyzes the cyclization of GTP to (8S)-3',8-cyclo-7,8-dihydroguanosine 5'-triphosphate. The chain is Probable GTP 3',8-cyclase from Methanothermobacter marburgensis (strain ATCC BAA-927 / DSM 2133 / JCM 14651 / NBRC 100331 / OCM 82 / Marburg) (Methanobacterium thermoautotrophicum).